Here is a 128-residue protein sequence, read N- to C-terminus: Small ribosomal subunit protein uS12 (128 aa).

At aspartate 89 the chain carries 3-methylthioaspartic acid.

The protein belongs to the universal ribosomal protein uS12 family. As to quaternary structure, part of the 30S ribosomal subunit. Contacts proteins S8 and S17. May interact with IF1 in the 30S initiation complex.

Its function is as follows. With S4 and S5 plays an important role in translational accuracy. In terms of biological role, interacts with and stabilizes bases of the 16S rRNA that are involved in tRNA selection in the A site and with the mRNA backbone. Located at the interface of the 30S and 50S subunits, it traverses the body of the 30S subunit contacting proteins on the other side and probably holding the rRNA structure together. The combined cluster of proteins S8, S12 and S17 appears to hold together the shoulder and platform of the 30S subunit. The chain is Small ribosomal subunit protein uS12 from Campylobacter jejuni subsp. doylei (strain ATCC BAA-1458 / RM4099 / 269.97).